A 248-amino-acid chain; its full sequence is Ribosomal RNA small subunit methyltransferase J (248 aa).

Residues 97–98 (RD), 113–114 (ER), and Asp-167 each bind S-adenosyl-L-methionine.

This sequence belongs to the methyltransferase superfamily. RsmJ family.

It localises to the cytoplasm. It catalyses the reaction guanosine(1516) in 16S rRNA + S-adenosyl-L-methionine = N(2)-methylguanosine(1516) in 16S rRNA + S-adenosyl-L-homocysteine + H(+). Functionally, specifically methylates the guanosine in position 1516 of 16S rRNA. The protein is Ribosomal RNA small subunit methyltransferase J of Aeromonas hydrophila subsp. hydrophila (strain ATCC 7966 / DSM 30187 / BCRC 13018 / CCUG 14551 / JCM 1027 / KCTC 2358 / NCIMB 9240 / NCTC 8049).